The chain runs to 98 residues: NADH-ubiquinone oxidoreductase chain 4L (98 aa).

3 helical membrane-spanning segments follow: residues 1-21, 26-46, and 61-81; these read MSLIHMNVMMAFSMSLVGLLM, LMSALLCLEGMALSLFIFTTL, and IILLVFTACEAAIGLALLVMI.

Belongs to the complex I subunit 4L family. In terms of assembly, core subunit of respiratory chain NADH dehydrogenase (Complex I) which is composed of 45 different subunits.

It is found in the mitochondrion inner membrane. It carries out the reaction a ubiquinone + NADH + 5 H(+)(in) = a ubiquinol + NAD(+) + 4 H(+)(out). Functionally, core subunit of the mitochondrial membrane respiratory chain NADH dehydrogenase (Complex I) which catalyzes electron transfer from NADH through the respiratory chain, using ubiquinone as an electron acceptor. Part of the enzyme membrane arm which is embedded in the lipid bilayer and involved in proton translocation. The polypeptide is NADH-ubiquinone oxidoreductase chain 4L (MT-ND4L) (Physeter macrocephalus (Sperm whale)).